Here is a 447-residue protein sequence, read N- to C-terminus: MIEDNKENKENKDHSSERGRVTLIFSLENEVGGLIKVLKIFQENHVSLLHIESRKSKQRNSEFEIFVDCDISREQLNDIFPLLKSHATVLSVDSPDQLTAKEDVMETVPWFPKKISDLDFCANRVLLYGSELDADHPGFKDNVYRRRRKYFAELAMNYKHGDPIPKIEFTEEEIKTWGTIFRELNKLYPTHACREYLRNLPLLSKYCGYREDNIPQLEDVSNFLKERTGFSIRPVAGYLSPRDFLSGLAFRVFHCTQYVRHSSDPLYTPEPDTCHELLGHVPLLAEPSFAQFSQEIGLASLGASEETVQKLATCYFFTVEFGLCKQDGQLRVFGAGLLSSISELKHALSGHAKVKPFDPKIACKQECLITSFQDVYFVSESFEDAKEKMREFAKTVKRPFGLKYNPYTQSVQVLRDTKSITSAMNELRYDLDVISDALARVTRWPSV.

The ACT domain maps to 22 to 97; it reads TLIFSLENEV…TVLSVDSPDQ (76 aa). At Ser-61 the chain carries Phosphoserine; by PKA. Residues Tyr-238, Arg-260, and Thr-268 each coordinate L-tryptophan. Residues His-275, His-280, and Glu-320 each coordinate Fe cation. The L-tryptophan site is built by Ser-339 and Ile-369.

It belongs to the biopterin-dependent aromatic amino acid hydroxylase family. Homotetramer. Interacts with DNAJC12. The cofactor is Fe(2+). Post-translationally, ubiquitinated, leading to its degradation by the proteasome. Ubiquitinated is triggered by phosphorylation. Phosphorylated; triggering degradation by the proteasome.

It catalyses the reaction (6R)-L-erythro-5,6,7,8-tetrahydrobiopterin + L-tryptophan + O2 = 5-hydroxy-L-tryptophan + (4aS,6R)-4a-hydroxy-L-erythro-5,6,7,8-tetrahydrobiopterin. Its pathway is aromatic compound metabolism; serotonin biosynthesis; serotonin from L-tryptophan: step 1/2. Oxidizes L-tryptophan to 5-hydroxy-l-tryptophan in the rate-determining step of serotonin biosynthesis. This is Tryptophan 5-hydroxylase 1 from Mus musculus (Mouse).